The chain runs to 57 residues: MQSLAQFKSSGLWVTTHAWLNDRFLLPESQQKNLAELKRSFLDPALKRINEKTPLLA.

This is an uncharacterized protein from Escherichia coli.